A 247-amino-acid polypeptide reads, in one-letter code: E3 SUMO-protein ligase NSE2 (247 aa).

M1 is subject to N-acetylmethionine. Residues K90 and K107 each participate in a glycyl lysine isopeptide (Lys-Gly) (interchain with G-Cter in SUMO2) cross-link. Position 116 is a phosphoserine (S116). Glycyl lysine isopeptide (Lys-Gly) (interchain with G-Cter in SUMO2) cross-links involve residues K125 and K130. The SP-RING-type zinc finger occupies V154 to K240. Residues C185, H187, C210, and C215 each coordinate Zn(2+).

It belongs to the NSE2 family. In terms of assembly, component of the SMC5-SMC6 complex which consists at least of SMC5, SMC6, NSMCE2, NSMCE1, NSMCE4A or EID3 and NSMCE3. In terms of processing, sumoylated, possibly via autosumoylation.

It is found in the nucleus. Its subcellular location is the chromosome. The protein localises to the telomere. It localises to the PML body. The protein operates within protein modification; protein sumoylation. E3 SUMO-protein ligase component of the SMC5-SMC6 complex, a complex involved in DNA double-strand break repair by homologous recombination. Is not be required for the stability of the complex. The complex may promote sister chromatid homologous recombination by recruiting the SMC1-SMC3 cohesin complex to double-strand breaks. Acts as an E3 ligase mediating SUMO attachment to various proteins such as SMC6L1 and TSNAX, the shelterin complex subunits TERF1, TERF2, TINF2 and TERF2IP, RAD51AP1, and maybe the cohesin components RAD21 and STAG2. Required for recruitment of telomeres to PML nuclear bodies. Required for sister chromatid cohesion during prometaphase and mitotic progression. In Mus musculus (Mouse), this protein is E3 SUMO-protein ligase NSE2 (Nsmce2).